We begin with the raw amino-acid sequence, 348 residues long: N-(sulfonatooxy)prop-2-enimidothioate sulfolyase (348 aa).

7 Kelch repeats span residues 1–33 (MARTLQGEWMKVEQKGGQVPAPRSSHGIAVIGD), 34–85 (KLYC…VAVG), 87–133 (KLYV…FHSM), 139–194 (HVYV…VVQG), 209–254 (KIPT…FAHA), 259–314 (YIII…ASTT), and 322–348 (GLLVHGGKLMTNERTDEMYFFAVNSST). A (Z)-N-(sulfonatooxy)alkanimidothioate is bound by residues Glu46, Arg94, Thr129, Phe130, and Arg157. Arg94 functions as the Proton donor in the catalytic mechanism. Arg157 functions as the Proton donor in the catalytic mechanism. The Proton acceptor role is filled by Glu220. Glu266 contributes to the Fe(2+) binding site. Arg269 lines the a (Z)-N-(sulfonatooxy)alkanimidothioate pocket. Residues Asp270 and His274 each contribute to the Fe(2+) site. 2 residues coordinate a (Z)-N-(sulfonatooxy)alkanimidothioate: Trp309 and Val310.

Homodimer. It depends on Fe(2+) as a cofactor. As to expression, expressed constitutively in roots, stems, leaves, flowers, siliques and seedlings.

The enzyme catalyses (Z)-N-(sulfonatooxy)prop-2-enimidothioate = allyl thiocyanate + sulfate. It catalyses the reaction (Z)-N-(sulfonatooxy)prop-2-enimidothioate = 2-(thiiran-2-yl)acetonitrile + sulfate. It carries out the reaction (Z)-N-(sulfonatooxy)prop-2-enimidothioate = allyl isothiocyanate + sulfate. The catalysed reaction is (Z)-phenyl-N-(sulfonatooxy)methanimidothioate = phenylacetonitrile + sulfur + sulfate. The enzyme catalyses glucoerucin + H2O = (Z)-4-methylsulfanylbutyl-N-(sulfonatooxy)methanimidothioate + D-glucose. It catalyses the reaction (Z)-4-methylsulfanylbutyl-N-(sulfonatooxy)methanimidothioate = 5-(methylsulfanyl)pentanenitrile + sulfur + sulfate + H(+). Its activity is regulated as follows. Stimulated by the presence of Fe(2+) leading to an increase formation of both thiocyanate and epithionitrile with allylglucosinolate as substrate in the presence of myrosinase. Repressed by EDTA. In terms of biological role, specifier protein that contributes to constitutive and herbivore-induced simple nitrile formation. Catalyzes allylthiocyanate and corresponding epithionitrile formation from allylglucosinolate in the presence of myrosinase. Also converts aliphatic glucosinolates, such as indol-3-ylmethylglucosinolate, 4-methylsulfinylbutylglucosinolate, 4-methylthiobutyl- and benzylisothiocyanate, to simple nitriles. In Thlaspi arvense (Field penny-cress), this protein is N-(sulfonatooxy)prop-2-enimidothioate sulfolyase.